We begin with the raw amino-acid sequence, 244 residues long: tRNA pseudouridine synthase A (244 aa).

The active-site Nucleophile is the Asp53. Residue Tyr111 coordinates substrate.

It belongs to the tRNA pseudouridine synthase TruA family. As to quaternary structure, homodimer.

It catalyses the reaction uridine(38/39/40) in tRNA = pseudouridine(38/39/40) in tRNA. Its function is as follows. Formation of pseudouridine at positions 38, 39 and 40 in the anticodon stem and loop of transfer RNAs. The sequence is that of tRNA pseudouridine synthase A from Bacillus sp. (strain KSM-64).